The sequence spans 185 residues: UPF0301 protein MS0260 (185 aa).

Belongs to the UPF0301 (AlgH) family.

The protein is UPF0301 protein MS0260 of Mannheimia succiniciproducens (strain KCTC 0769BP / MBEL55E).